A 316-amino-acid polypeptide reads, in one-letter code: uncharacterized protein (316 aa).

The protein belongs to the asfivirus F317L family.

The protein localises to the virion. This is an uncharacterized protein from Ornithodoros (relapsing fever ticks).